Consider the following 67-residue polypeptide: Small ribosomal subunit protein eS31 (67 aa).

Zn(2+) contacts are provided by C35, C38, C54, and C57. A C4-type zinc finger spans residues 35 to 57; that stretch reads CPRCGSIMAHHMKPLERWACGKC.

It belongs to the eukaryotic ribosomal protein eS31 family. As to quaternary structure, part of the 30S ribosomal subunit. The cofactor is Zn(2+).

The polypeptide is Small ribosomal subunit protein eS31 (Sulfolobus acidocaldarius (strain ATCC 33909 / DSM 639 / JCM 8929 / NBRC 15157 / NCIMB 11770)).